Here is a 720-residue protein sequence, read N- to C-terminus: Phosphoribosylformylglycinamidine synthase subunit PurL (720 aa).

Residue H47 is part of the active site. Residues Y50 and K89 each contribute to the ATP site. E91 provides a ligand contact to Mg(2+). Substrate is bound by residues 92–95 and R114; that span reads SHNH. The active-site Proton acceptor is H93. Mg(2+) is bound at residue D115. Residue Q238 participates in substrate binding. Mg(2+) is bound at residue D266. Position 310-312 (310-312) interacts with substrate; the sequence is ESQ. ATP is bound by residues D488 and G525. Residue N526 participates in Mg(2+) binding. S528 provides a ligand contact to substrate.

Belongs to the FGAMS family. Monomer. Part of the FGAM synthase complex composed of 1 PurL, 1 PurQ and 2 PurS subunits.

The protein localises to the cytoplasm. It catalyses the reaction N(2)-formyl-N(1)-(5-phospho-beta-D-ribosyl)glycinamide + L-glutamine + ATP + H2O = 2-formamido-N(1)-(5-O-phospho-beta-D-ribosyl)acetamidine + L-glutamate + ADP + phosphate + H(+). Its pathway is purine metabolism; IMP biosynthesis via de novo pathway; 5-amino-1-(5-phospho-D-ribosyl)imidazole from N(2)-formyl-N(1)-(5-phospho-D-ribosyl)glycinamide: step 1/2. Functionally, part of the phosphoribosylformylglycinamidine synthase complex involved in the purines biosynthetic pathway. Catalyzes the ATP-dependent conversion of formylglycinamide ribonucleotide (FGAR) and glutamine to yield formylglycinamidine ribonucleotide (FGAM) and glutamate. The FGAM synthase complex is composed of three subunits. PurQ produces an ammonia molecule by converting glutamine to glutamate. PurL transfers the ammonia molecule to FGAR to form FGAM in an ATP-dependent manner. PurS interacts with PurQ and PurL and is thought to assist in the transfer of the ammonia molecule from PurQ to PurL. This Cereibacter sphaeroides (strain ATCC 17023 / DSM 158 / JCM 6121 / CCUG 31486 / LMG 2827 / NBRC 12203 / NCIMB 8253 / ATH 2.4.1.) (Rhodobacter sphaeroides) protein is Phosphoribosylformylglycinamidine synthase subunit PurL.